The sequence spans 252 residues: Ribosomal RNA small subunit methyltransferase A (252 aa).

Residues asparagine 10, leucine 12, glycine 36, glutamate 57, aspartate 81, and asparagine 98 each coordinate S-adenosyl-L-methionine.

The protein belongs to the class I-like SAM-binding methyltransferase superfamily. rRNA adenine N(6)-methyltransferase family. RsmA subfamily.

Its subcellular location is the cytoplasm. The enzyme catalyses adenosine(1518)/adenosine(1519) in 16S rRNA + 4 S-adenosyl-L-methionine = N(6)-dimethyladenosine(1518)/N(6)-dimethyladenosine(1519) in 16S rRNA + 4 S-adenosyl-L-homocysteine + 4 H(+). Functionally, specifically dimethylates two adjacent adenosines (A1518 and A1519) in the loop of a conserved hairpin near the 3'-end of 16S rRNA in the 30S particle. May play a critical role in biogenesis of 30S subunits. The protein is Ribosomal RNA small subunit methyltransferase A of Mycoplasmopsis pulmonis (strain UAB CTIP) (Mycoplasma pulmonis).